Consider the following 147-residue polypeptide: Peptide deformylase 1 (147 aa).

The Fe cation site is built by Cys-90 and His-132. Residue Glu-133 is part of the active site. His-136 provides a ligand contact to Fe cation.

Belongs to the polypeptide deformylase family. Requires Fe(2+) as cofactor.

It carries out the reaction N-terminal N-formyl-L-methionyl-[peptide] + H2O = N-terminal L-methionyl-[peptide] + formate. Removes the formyl group from the N-terminal Met of newly synthesized proteins. Requires at least a dipeptide for an efficient rate of reaction. N-terminal L-methionine is a prerequisite for activity but the enzyme has broad specificity at other positions. In Clostridium perfringens (strain 13 / Type A), this protein is Peptide deformylase 1.